The following is a 148-amino-acid chain: 1,4-dihydroxy-2-naphthoyl-CoA hydrolase (148 aa).

The active site involves D15.

The protein belongs to the 4-hydroxybenzoyl-CoA thioesterase family. DHNA-CoA hydrolase subfamily.

It catalyses the reaction 1,4-dihydroxy-2-naphthoyl-CoA + H2O = 1,4-dihydroxy-2-naphthoate + CoA + H(+). It functions in the pathway cofactor biosynthesis; phylloquinone biosynthesis. Its pathway is quinol/quinone metabolism; 1,4-dihydroxy-2-naphthoate biosynthesis; 1,4-dihydroxy-2-naphthoate from chorismate: step 7/7. In terms of biological role, catalyzes the hydrolysis of 1,4-dihydroxy-2-naphthoyl-CoA (DHNA-CoA) to 1,4-dihydroxy-2-naphthoate (DHNA), a reaction involved in phylloquinone (vitamin K1) biosynthesis. In Nostoc sp. (strain PCC 7120 / SAG 25.82 / UTEX 2576), this protein is 1,4-dihydroxy-2-naphthoyl-CoA hydrolase.